We begin with the raw amino-acid sequence, 464 residues long: Arabinose-proton symporter (464 aa).

The next 12 membrane-spanning stretches (helical) occupy residues 21-43 (GFVI…DTAV), 63-85 (GLVI…FLSD), 92-111 (ILMT…ALSQ), 116-138 (LIIA…VTYI), 150-172 (LSSL…NLAV), 185-207 (GWRW…LLVV), 266-288 (ALVI…ITYY), 303-325 (GFVT…VLLI), 332-354 (KLMS…SFYF), 364-386 (VLIL…IMIS), 398-420 (AGIA…PMMI), and 424-446 (GLAY…VVTI).

Belongs to the major facilitator superfamily. Sugar transporter (TC 2.A.1.1) family.

Its subcellular location is the cell membrane. The catalysed reaction is L-arabinose(in) + H(+)(in) = L-arabinose(out) + H(+)(out). The enzyme catalyses D-galactose(in) + H(+)(in) = D-galactose(out) + H(+)(out). It carries out the reaction D-xylose(in) + H(+)(in) = D-xylose(out) + H(+)(out). Its function is as follows. Uptake of L-arabinose across the cytoplasmic membrane with the concomitant transport of protons into the cell (symport system). In the presence of inducing amounts of L-arabinose, can import both D-galactose and D-xylose. Can also transport the disaccharide alpha-1,5-arabinobiose. The polypeptide is Arabinose-proton symporter (araE) (Bacillus subtilis (strain 168)).